Consider the following 305-residue polypeptide: tRNA dimethylallyltransferase (305 aa).

9-16 (GPTASGKS) lines the ATP pocket. Substrate is bound at residue 11 to 16 (TASGKS). The interval 34 to 37 (DSKQ) is interaction with substrate tRNA.

Belongs to the IPP transferase family. As to quaternary structure, monomer. Mg(2+) is required as a cofactor.

The catalysed reaction is adenosine(37) in tRNA + dimethylallyl diphosphate = N(6)-dimethylallyladenosine(37) in tRNA + diphosphate. In terms of biological role, catalyzes the transfer of a dimethylallyl group onto the adenine at position 37 in tRNAs that read codons beginning with uridine, leading to the formation of N6-(dimethylallyl)adenosine (i(6)A). This chain is tRNA dimethylallyltransferase, found in Anaplasma marginale (strain St. Maries).